The sequence spans 20 residues: NAAVAGAVIEGATLTFEVLQ.

Residues 3–12 (AVAGAVIEGA) form a plays an important role in the hemolytic activity region. Residues 11 to 20 (GATLTFEVLQ) are N-terminal region.

Belongs to the actinoporin family. Sea anemone subfamily. In terms of assembly, octamer or nonamer in membranes. Monomer in the soluble state.

It is found in the secreted. The protein localises to the nematocyst. It localises to the target cell membrane. Pore-forming protein that forms cations-selective hydrophilic pores of around 1 nm and causes cardiac stimulation and cytolysis. Pore formation is a multi-step process that involves specific recognition of membrane sphingomyelin (but neither cholesterol nor phosphatidylcholine) using aromatic rich region and adjacent phosphocholine (POC) binding site, firm binding to the membrane (mainly driven by hydrophobic interactions) accompanied by the transfer of the N-terminal region to the lipid-water interface and finally pore formation after oligomerization of monomers. The protein is Cytolysin tenebrosin-A of Actinia tenebrosa (Australian red waratah sea anemone).